A 255-amino-acid chain; its full sequence is MDKIEIEEELICSLAVKGEKSIHKLLLNILAIVKQLKTIQSDPVLTYQVSTKAQQQLQSQQLQQPQSIPSSTNNSTNTNTNNSTTTTTTSSTSSTTTPTTTTSTTSPLNSKDSTATTTTKEQPSSPTLPTLNLNFVNDNDKIKELNQNCIQSILALQKTIKEISLLETKISQKPKDNIDNDDTIMKDDNNNSSTSAPTTTTINIEKQDQTSLSNELERLKMDAYQKNCVIKKLIDNMRLLQLSINSMNRTSTGTD.

The segment covering 58 to 107 (QSQQLQQPQSIPSSTNNSTNTNTNNSTTTTTTSSTSSTTTPTTTTSTTSP) has biased composition (low complexity). 2 disordered regions span residues 58–133 (QSQQ…TLNL) and 177–207 (NIDN…IEKQ). Polar residues predominate over residues 108–133 (LNSKDSTATTTTKEQPSSPTLPTLNL). Basic and acidic residues predominate over residues 177–189 (NIDNDDTIMKDDN). Low complexity predominate over residues 190 to 201 (NNSSTSAPTTTT).

It belongs to the Mediator complex subunit 30 family. Highly divergent. In terms of assembly, component of the Mediator complex.

The protein localises to the nucleus. Functionally, component of the Mediator complex, a coactivator involved in the regulated transcription of nearly all RNA polymerase II-dependent genes. Mediator functions as a bridge to convey information from gene-specific regulatory proteins to the basal RNA polymerase II transcription machinery. Mediator is recruited to promoters by direct interactions with regulatory proteins and serves as a scaffold for the assembly of a functional preinitiation complex with RNA polymerase II and the general transcription factors. The protein is Putative mediator of RNA polymerase II transcription subunit 30 (med30) of Dictyostelium discoideum (Social amoeba).